Consider the following 297-residue polypeptide: 4-hydroxy-tetrahydrodipicolinate synthase (297 aa).

Threonine 46 contacts pyruvate. Catalysis depends on tyrosine 134, which acts as the Proton donor/acceptor. Lysine 162 (schiff-base intermediate with substrate) is an active-site residue. Isoleucine 204 lines the pyruvate pocket.

This sequence belongs to the DapA family. Homotetramer; dimer of dimers.

Its subcellular location is the cytoplasm. It carries out the reaction L-aspartate 4-semialdehyde + pyruvate = (2S,4S)-4-hydroxy-2,3,4,5-tetrahydrodipicolinate + H2O + H(+). It participates in amino-acid biosynthesis; L-lysine biosynthesis via DAP pathway; (S)-tetrahydrodipicolinate from L-aspartate: step 3/4. Catalyzes the condensation of (S)-aspartate-beta-semialdehyde [(S)-ASA] and pyruvate to 4-hydroxy-tetrahydrodipicolinate (HTPA). The chain is 4-hydroxy-tetrahydrodipicolinate synthase from Stenotrophomonas maltophilia (strain R551-3).